The chain runs to 258 residues: Thiazole synthase (258 aa).

Residue lysine 97 is the Schiff-base intermediate with DXP of the active site. 1-deoxy-D-xylulose 5-phosphate-binding positions include glycine 158, 184-185 (AG), and 206-207 (NT).

The protein belongs to the ThiG family. As to quaternary structure, homotetramer. Forms heterodimers with either ThiH or ThiS.

The protein resides in the cytoplasm. The catalysed reaction is [ThiS sulfur-carrier protein]-C-terminal-Gly-aminoethanethioate + 2-iminoacetate + 1-deoxy-D-xylulose 5-phosphate = [ThiS sulfur-carrier protein]-C-terminal Gly-Gly + 2-[(2R,5Z)-2-carboxy-4-methylthiazol-5(2H)-ylidene]ethyl phosphate + 2 H2O + H(+). It participates in cofactor biosynthesis; thiamine diphosphate biosynthesis. Functionally, catalyzes the rearrangement of 1-deoxy-D-xylulose 5-phosphate (DXP) to produce the thiazole phosphate moiety of thiamine. Sulfur is provided by the thiocarboxylate moiety of the carrier protein ThiS. In vitro, sulfur can be provided by H(2)S. This is Thiazole synthase from Marinomonas sp. (strain MWYL1).